Consider the following 491-residue polypeptide: Cyclin-A1-3 (491 aa).

Residues 1 to 21 (MSSSLASRRSSSSSAAKRPAA) show a composition bias toward low complexity. Disordered stretches follow at residues 1–32 (MSSSLASRRSSSSSAAKRPAAGEGGGKAAAGA) and 69–106 (SLASGRNVGTNRVSAVKSASTKPASAISRHESAPQKES). The segment covering 75–91 (NVGTNRVSAVKSASTKP) has biased composition (polar residues).

Belongs to the cyclin family. Cyclin AB subfamily.

This is Cyclin-A1-3 (CYCA1-3) from Oryza sativa subsp. japonica (Rice).